The sequence spans 152 residues: Large ribosomal subunit protein bL9 (152 aa).

The protein belongs to the bacterial ribosomal protein bL9 family.

Functionally, binds to the 23S rRNA. The polypeptide is Large ribosomal subunit protein bL9 (Nostoc punctiforme (strain ATCC 29133 / PCC 73102)).